We begin with the raw amino-acid sequence, 239 residues long: Exosome complex exonuclease RRP46 homolog (239 aa).

At Met-1 the chain carries N-acetylmethionine.

It belongs to the RNase PH family. Probable component of the RNA exosome complex.

It is found in the nucleus. Its subcellular location is the nucleolus. Its function is as follows. Probable component of the exosome 3'-&gt;5' exoribonuclease complex, a complex that degrades inherently unstable mRNAs containing AU-rich elements (AREs) within their 3'-untranslated regions. The protein is Exosome complex exonuclease RRP46 homolog of Arabidopsis thaliana (Mouse-ear cress).